The following is a 251-amino-acid chain: HTH-type transcriptional regulator UlaR (251 aa).

The region spanning Glu3 to Ala58 is the HTH deoR-type domain. A DNA-binding region (H-T-H motif) is located at residues Val20–Asp39.

Its subcellular location is the cytoplasm. Represses ulaG and the ulaABCDEF operon. This chain is HTH-type transcriptional regulator UlaR, found in Shigella dysenteriae serotype 1 (strain Sd197).